A 134-amino-acid polypeptide reads, in one-letter code: Z-ring associated protein G (134 aa).

Residues 7 to 27 (EIWVAIGIAFIVGLFIGYIIV) traverse the membrane as a helical segment. The tract at residues 107–134 (ATDKSQNEQPRDYSEGASGLFKENKEEN) is disordered. A compositionally biased stretch (basic and acidic residues) spans 111-120 (SQNEQPRDYS).

It belongs to the ZapG family.

The protein localises to the cell inner membrane. Functionally, involved in cell division, cell envelope biogenesis and cell shape maintenance. This is Z-ring associated protein G from Haemophilus influenzae (strain ATCC 51907 / DSM 11121 / KW20 / Rd).